The chain runs to 70 residues: DNA-directed RNA polymerase subunit omega (70 aa).

Belongs to the RNA polymerase subunit omega family. The RNAP catalytic core consists of 2 alpha, 1 beta, 1 beta' and 1 omega subunit. When a sigma factor is associated with the core the holoenzyme is formed, which can initiate transcription.

It carries out the reaction RNA(n) + a ribonucleoside 5'-triphosphate = RNA(n+1) + diphosphate. Its function is as follows. Promotes RNA polymerase assembly. Latches the N- and C-terminal regions of the beta' subunit thereby facilitating its interaction with the beta and alpha subunits. The chain is DNA-directed RNA polymerase subunit omega from Methylobacillus flagellatus (strain ATCC 51484 / DSM 6875 / VKM B-1610 / KT).